Here is a 2119-residue protein sequence, read N- to C-terminus: Outer kinetochore KNL1 complex subunit KNL1 (2119 aa).

A disordered region spans residues 1 to 59; sequence MDGVYSEANEENDNTQRPVRRQHSSILKPPRSPLQDLKCGNQTNQEPNPPRKRKSSRRV. Residues 1–202 form a may mediate oligomerization region; the sequence is MDGVYSEANE…SDNFIKRLKT (202 aa). 2 interaction with microtubules regions span residues 17–34 and 53–80; these read RPVR…RSPL and RKSS…ERNS. Positions 23-80 are interaction with PP1CA; contains the protein phosphatase 1 (PP1) interaction motifs SILK, RVXF and phi-phi; that stretch reads HSSILKPPRSPLQDLKCGNQTNQEPNPPRKRKSSRRVSFADTIKVFQTESHMKTERNS. 3 positions are modified to phosphoserine: S24, S32, and S60. Residues 124–140 form an interaction with BUB1 region; the sequence is ENQMDLTASHTVMITKG. Residues 160–179 form an interaction with BUB1B region; that stretch reads ENLKHHAANSRIKKDLACST. S538 is modified (phosphoserine). Residues T540 and T739 each carry the phosphothreonine modification. Copy 1 of the repeat occupies 723–827; it reads DKTILFSEGN…MTKSHTVFID (105 aa). The tract at residues 723 to 1027 is 2 X 104 AA approximate repeats; the sequence is DKTILFSEGN…VTRSHTVFID (305 aa). S794 and S878 each carry phosphoserine. Repeat 2 spans residues 923–1027; that stretch reads KSITFPENDK…VTRSHTVFID (105 aa). A phosphoserine mark is found at S1243 and S1464. Positions 1557-1583 are disordered; it reads SQRESLPSENKTENCRAQKRTRVEEND. Residues 1566 to 1583 show a composition bias toward basic and acidic residues; it reads NKTENCRAQKRTRVEEND. The Nuclear localization signal signature appears at 1577–1590; sequence TRVEENDVTNEKKI. Phosphoserine is present on residues S1616, S1627, and S1642. The segment at 1763 to 1890 is required for interaction with ZWINT; that stretch reads KVKDYSDEEL…FLEVETQKTQ (128 aa). Positions 1799-1890 form a coiled coil; the sequence is VALYNKLVHS…FLEVETQKTQ (92 aa). Residues 1873-2093 form an interaction with NSL1, DSN1 and required for assembly into the outer kinetochore region; sequence EEEELQRKFL…GKTGHDEIAA (221 aa).

In terms of assembly, component of the KNL1 complex composed of KNL1 and ZWINT. Part of the ten-subunit outer kinetochore KMN network that includes the KNL1, MIS12 and NDC80 complexes; a bioriented kinetochore contains approximately 150 copies of the network. Interacts (via C-terminus) with the MIS12 complex subunits NSL1 (via C-terminus), PMF1 and DSN1; the interaction is direct. Interacts (via N-terminal region) with BUB1B (via BUB1 N-terminal domain); the interaction is direct and is required for cell cycle arrest upon activation of the mitotic spindle assembly checkpoint. Interacts (via N-terminal region) with BUB1 (via BUB1 N-terminal domain); the interaction is direct. Interacts with the protein phosphatase PP1 subunit PPP1CA; the interaction is direct and mutually exclusive with binding to microtubules. Interacts with the protein phosphatase PP1 subunit PPP1CC; the interaction is direct and mutually exclusive with binding to microtubules. In terms of processing, phosphorylation by AURKB negatively regulates its interaction with protein phosphatase 1 (PP1) subunit PPP1CA and with microtubules. As to expression, expressed in oocytes during meiotic progression (at protein level). Expressed during spermatogenesis.

The protein resides in the nucleus. It localises to the chromosome. The protein localises to the centromere. It is found in the kinetochore. Its subcellular location is the cytoplasm. Functionally, acts as a component of the outer kinetochore KNL1 complex that serves as a docking point for spindle assembly checkpoint components and mediates microtubule-kinetochore interactions. Kinetochores, consisting of a centromere-associated inner segment and a microtubule-contacting outer segment, play a crucial role in chromosome segregation by mediating the physical connection between centromeric DNA and spindle microtubules. The outer kinetochore is made up of the ten-subunit KMN network, comprising the MIS12, NDC80 and KNL1 complexes, and auxiliary microtubule-associated components; together they connect the outer kinetochore with the inner kinetochore, bind microtubules, and mediate interactions with mitotic checkpoint proteins that delay anaphase until chromosomes are bioriented on the spindle. Required for kinetochore binding by a distinct subset of kMAPs (kinetochore-bound microtubule-associated proteins) and motors. Acts in coordination with CENPK to recruit the NDC80 complex to the outer kinetochore. Can bind either to microtubules or to the protein phosphatase 1 (PP1) catalytic subunits PPP1CA and PPP1CC (via overlapping binding sites), it has higher affinity for PP1. Recruits MAD2L1 to the kinetochore and also directly links BUB1 and BUB1B to the kinetochore. In addition to orienting mitotic chromosomes, it is also essential for alignment of homologous chromosomes during meiotic metaphase I. In meiosis I, required to activate the spindle assembly checkpoint at unattached kinetochores to correct erroneous kinetochore-microtubule attachments. The polypeptide is Outer kinetochore KNL1 complex subunit KNL1 (Mus musculus (Mouse)).